The following is a 637-amino-acid chain: Extracellular metalloproteinase 2 (637 aa).

A signal peptide spans 1–20; sequence MRSFLLASLASVATLKSAQA. The propeptide occupies 21–244; it reads HPAHSTRGLS…VHAVVDYSAD (224 aa). N-linked (GlcNAc...) asparagine glycans are attached at residues asparagine 302, asparagine 328, asparagine 337, and asparagine 413. Histidine 430 serves as a coordination point for Zn(2+). Glutamate 431 is a catalytic residue. Histidine 434 lines the Zn(2+) pocket.

The protein belongs to the peptidase M36 family. It depends on Zn(2+) as a cofactor.

It is found in the secreted. In terms of biological role, secreted metalloproteinase that allows assimilation of proteinaceous substrates. The protein is Extracellular metalloproteinase 2 (MEP2) of Phaeosphaeria nodorum (strain SN15 / ATCC MYA-4574 / FGSC 10173) (Glume blotch fungus).